Here is a 198-residue protein sequence, read N- to C-terminus: Altered inheritance of mitochondria protein 34, mitochondrial (198 aa).

Residues 1–55 (MSISLFGRIVSQQFSGIRAAGPGRSLYLPFTLLLKQPGAYKVSLHRYVHSTQTKS) constitute a mitochondrion transit peptide. The SAP domain occupies 69-103 (FQKFTVKVLKEQCKSRGLKLSGRKSDLLQRLITHD). A helical membrane pass occupies residues 172 to 187 (IFLLGFFMLSCLWWNL).

This sequence belongs to the AIM34 family.

It is found in the mitochondrion membrane. The chain is Altered inheritance of mitochondria protein 34, mitochondrial (AIM34) from Saccharomyces cerevisiae (strain JAY291) (Baker's yeast).